Reading from the N-terminus, the 427-residue chain is MSIVIIGSGQAGFEAAVSLRSHGFSGTITLVGDEPGVPYQRPPLSKAYLHSDPDRESLALRPAQYFDDHRITLTCGKPVVRIDRDAQRVELIDATAIEYDHLILATGARNRLLPVPGANLPGVHYLRTAGEAESLTSSMASCSSLVVIGAGFIGLEVAAAARKKGLDVTVVEAMDRPMARALSSVMSGYFSTAHTEHGVHMRLSTGVKTINAADGRAAGVTTNSGDVIHADAVVVGIGVVPNIELAALTGLPVDNGIVVDEYLRTPDENISAIGDCAAYPIPGKAGLVRLESVQNAVDQARCLAAQLTGTSTHYRSVPWFWSEQYESKLQMAGLTAGADTHVVRGSVDSGVFSIFCFLGTRLLGVESVNKPRDHMAARKILATEMPLTPEQAADTDFDLKLAIARHKDTHKDEVASADIGERQVVAS.

2-34 provides a ligand contact to FAD; sequence SIVIIGSGQAGFEAAVSLRSHGFSGTITLVGDE. 144-172 contacts NAD(+); the sequence is SLVVIGAGFIGLEVAAAARKKGLDVTVVE.

The protein belongs to the FAD-dependent oxidoreductase family. It depends on FAD as a cofactor.

Functionally, the degradation of the thiocarbamate herbicide EPTC by cytochrome CYP116 (thcB) requires the participation of a flavoprotein, rhodocoxin reductase, and an iron-sulfur protein, rhodocoxin, to mediate the transfer of electrons from NADH to P450 for oxygen activation. In Rhodococcus erythropolis (Arthrobacter picolinophilus), this protein is Rhodocoxin reductase (thcD).